A 598-amino-acid polypeptide reads, in one-letter code: Glutamyl-tRNA(Gln) amidotransferase subunit E (598 aa).

Belongs to the GatB/GatE family. GatE subfamily. In terms of assembly, heterodimer of GatD and GatE.

It carries out the reaction L-glutamyl-tRNA(Gln) + L-glutamine + ATP + H2O = L-glutaminyl-tRNA(Gln) + L-glutamate + ADP + phosphate + H(+). Allows the formation of correctly charged Gln-tRNA(Gln) through the transamidation of misacylated Glu-tRNA(Gln) in organisms which lack glutaminyl-tRNA synthetase. The reaction takes place in the presence of glutamine and ATP through an activated gamma-phospho-Glu-tRNA(Gln). The GatDE system is specific for glutamate and does not act on aspartate. This Thermoplasma volcanium (strain ATCC 51530 / DSM 4299 / JCM 9571 / NBRC 15438 / GSS1) protein is Glutamyl-tRNA(Gln) amidotransferase subunit E.